A 550-amino-acid polypeptide reads, in one-letter code: Cytokinin dehydrogenase 10 (550 aa).

An N-terminal signal peptide occupies residues 1-26 (MMPRAQLTTFLIVTSFLSTVPYLRAP). Positions 64–245 (VHATPNGVFR…TRARIRLEPA (182 aa)) constitute an FAD-binding PCMH-type domain. Glycine 100, lysine 101, and glycine 102 together coordinate FAD. A Pros-8alpha-FAD histidine modification is found at histidine 103. Residues serine 104, glutamine 108, aspartate 169, threonine 174, serine 180, isoleucine 184, and isoleucine 235 each contribute to the FAD site. N-linked (GlcNAc...) asparagine glycosylation occurs at asparagine 289. The FAD site is built by tyrosine 489, serine 524, and glutamine 527. A disordered region spans residues 523-550 (LSPGQGIFPPPPPPSPPPPAAGEPITAS). A compositionally biased stretch (pro residues) spans 530–543 (FPPPPPPSPPPPAA).

This sequence belongs to the oxygen-dependent FAD-linked oxidoreductase family. In terms of assembly, monomer. FAD is required as a cofactor.

It is found in the secreted. Its subcellular location is the extracellular space. The enzyme catalyses N(6)-dimethylallyladenine + A + H2O = 3-methyl-2-butenal + adenine + AH2. Its function is as follows. Catalyzes the oxidation of cytokinins, a family of N(6)-substituted adenine derivatives that are plant hormones, where the substituent is an isopentenyl group. This chain is Cytokinin dehydrogenase 10 (CKX10), found in Oryza sativa subsp. japonica (Rice).